Consider the following 227-residue polypeptide: MGNCVGRQRRERPAAPGHPRKRAGRNEPLKKERLKWKSDYPMTDGQLRSKRDEFWDTAPAFEGRKEIWDALKAAAYAAEANDHELAQAILDGASITLPHGTLCECYDELGNRYQLPIYCLSPPVNLLLEHTEEESLEPPEPTPSVRREFPLKVRLSTGKDVRLSASLPDTVGQLKRQLHSQEGIEPSWQRWFFSGKLLTDRTRLQETKIQKDFVIQVIINQPPPPQD.

Residues 1–35 form a disordered region; it reads MGNCVGRQRRERPAAPGHPRKRAGRNEPLKKERLK. Residues 24 to 35 are compositionally biased toward basic and acidic residues; that stretch reads GRNEPLKKERLK. Residues 149-224 form the Ubiquitin-like domain; that stretch reads FPLKVRLSTG…IQVIINQPPP (76 aa).

As to quaternary structure, interacts with UBTD1.

Its function is as follows. May be involved in the regulation of cellular senescence through a positive feedback loop with TP53. Is a TP53 downstream target gene that increases the stability of TP53 protein by promoting the ubiquitination and degradation of MDM2. This chain is Ubiquitin domain-containing protein 1 (Ubtd1), found in Rattus norvegicus (Rat).